The following is a 763-amino-acid chain: uncharacterized protein (763 aa).

One can recognise a TR mART core domain in the interval 380–607 (DSVLNPFNTN…YNIKVITMRL (228 aa)). The helical transmembrane segment at 684–700 (SYVSIYALLCPLLTNIY) threads the bilayer.

It localises to the membrane. This is an uncharacterized protein from Acanthamoeba polyphaga mimivirus (APMV).